The chain runs to 343 residues: Aspartate carbamoyltransferase catalytic subunit (343 aa).

2 residues coordinate carbamoyl phosphate: R54 and T55. K82 contributes to the L-aspartate binding site. The carbamoyl phosphate site is built by R104, H134, and Q137. Residues R177 and R232 each contribute to the L-aspartate site. Carbamoyl phosphate-binding residues include G277 and P278. The disordered stretch occupies residues 323-343; that stretch reads PDQSNPQRNVTNTSNWQETKR.

It belongs to the aspartate/ornithine carbamoyltransferase superfamily. ATCase family. As to quaternary structure, heterododecamer (2C3:3R2) of six catalytic PyrB chains organized as two trimers (C3), and six regulatory PyrI chains organized as three dimers (R2).

It catalyses the reaction carbamoyl phosphate + L-aspartate = N-carbamoyl-L-aspartate + phosphate + H(+). It participates in pyrimidine metabolism; UMP biosynthesis via de novo pathway; (S)-dihydroorotate from bicarbonate: step 2/3. Functionally, catalyzes the condensation of carbamoyl phosphate and aspartate to form carbamoyl aspartate and inorganic phosphate, the committed step in the de novo pyrimidine nucleotide biosynthesis pathway. The protein is Aspartate carbamoyltransferase catalytic subunit of Renibacterium salmoninarum (strain ATCC 33209 / DSM 20767 / JCM 11484 / NBRC 15589 / NCIMB 2235).